Reading from the N-terminus, the 307-residue chain is D-alanine--D-alanine ligase (307 aa).

The region spanning 108-301 is the ATP-grasp domain; that stretch reads KEVFAAAGLP…FPEFCAWLVE (194 aa). 135–185 contributes to the ATP binding site; sequence LPPPYVVKPNAEGSSVGVYIVHEDANGPPQLAADMPQDLMVETYVPGRELT. 3 residues coordinate Mg(2+): D252, E268, and N270.

This sequence belongs to the D-alanine--D-alanine ligase family. It depends on Mg(2+) as a cofactor. Mn(2+) is required as a cofactor.

The protein resides in the cytoplasm. The enzyme catalyses 2 D-alanine + ATP = D-alanyl-D-alanine + ADP + phosphate + H(+). The protein operates within cell wall biogenesis; peptidoglycan biosynthesis. In terms of biological role, cell wall formation. The sequence is that of D-alanine--D-alanine ligase from Cereibacter sphaeroides (strain ATCC 17029 / ATH 2.4.9) (Rhodobacter sphaeroides).